Consider the following 223-residue polypeptide: Deoxyribose-phosphate aldolase (223 aa).

D91 serves as the catalytic Proton donor/acceptor. K153 serves as the catalytic Schiff-base intermediate with acetaldehyde. K182 serves as the catalytic Proton donor/acceptor.

It belongs to the DeoC/FbaB aldolase family. DeoC type 1 subfamily.

The protein resides in the cytoplasm. The enzyme catalyses 2-deoxy-D-ribose 5-phosphate = D-glyceraldehyde 3-phosphate + acetaldehyde. Its pathway is carbohydrate degradation; 2-deoxy-D-ribose 1-phosphate degradation; D-glyceraldehyde 3-phosphate and acetaldehyde from 2-deoxy-alpha-D-ribose 1-phosphate: step 2/2. Its function is as follows. Catalyzes a reversible aldol reaction between acetaldehyde and D-glyceraldehyde 3-phosphate to generate 2-deoxy-D-ribose 5-phosphate. In Yersinia pestis bv. Antiqua (strain Angola), this protein is Deoxyribose-phosphate aldolase.